The chain runs to 278 residues: Indole-3-glycerol phosphate synthase (278 aa).

It belongs to the TrpC family.

The enzyme catalyses 1-(2-carboxyphenylamino)-1-deoxy-D-ribulose 5-phosphate + H(+) = (1S,2R)-1-C-(indol-3-yl)glycerol 3-phosphate + CO2 + H2O. It functions in the pathway amino-acid biosynthesis; L-tryptophan biosynthesis; L-tryptophan from chorismate: step 4/5. The sequence is that of Indole-3-glycerol phosphate synthase from Pseudomonas fluorescens (strain SBW25).